The sequence spans 398 residues: tRNA-specific 2-thiouridylase MnmA (398 aa).

Residues 18 to 25 (AMSGGVDS) and leucine 44 each bind ATP. Cysteine 112 functions as the Nucleophile in the catalytic mechanism. Cysteine 112 and cysteine 213 are oxidised to a cystine. Residue glycine 136 coordinates ATP. The tract at residues 163–165 (RDQ) is interaction with tRNA. Cysteine 213 functions as the Cysteine persulfide intermediate in the catalytic mechanism.

This sequence belongs to the MnmA/TRMU family.

It localises to the cytoplasm. It catalyses the reaction S-sulfanyl-L-cysteinyl-[protein] + uridine(34) in tRNA + AH2 + ATP = 2-thiouridine(34) in tRNA + L-cysteinyl-[protein] + A + AMP + diphosphate + H(+). In terms of biological role, catalyzes the 2-thiolation of uridine at the wobble position (U34) of tRNA, leading to the formation of s(2)U34. The sequence is that of tRNA-specific 2-thiouridylase MnmA from Sinorhizobium medicae (strain WSM419) (Ensifer medicae).